A 118-amino-acid chain; its full sequence is Alpha-amylase inhibitor 4 (118 aa).

Cystine bridges form between C7–C60, C21–C49, C30–C82, and C50–C101.

Belongs to the protease inhibitor I6 (cereal trypsin/alpha-amylase inhibitor) family.

It is found in the secreted. Its function is as follows. Alpha-amylase inhibitor. The chain is Alpha-amylase inhibitor 4 from Sorghum bicolor (Sorghum).